The following is a 174-amino-acid chain: Chromophore lyase CpcS/CpeS 1 (174 aa).

It belongs to the CpcS/CpeS biliprotein lyase family.

Functionally, covalently attaches a chromophore to Cys residue(s) of phycobiliproteins. This Trichodesmium erythraeum (strain IMS101) protein is Chromophore lyase CpcS/CpeS 1.